Here is a 229-residue protein sequence, read N- to C-terminus: Synaptogyrin-3 (229 aa).

Position 1 is an N-acetylmethionine (methionine 1). An MARVEL domain is found at 20–172 (FARRPQTLLR…LTVKALQRFR (153 aa)). The next 4 membrane-spanning stretches (helical) occupy residues 30-50 (VASW…GYVN), 70-90 (FGVA…LLDV), 105-125 (VLLD…GFCF), and 148-168 (AAIA…VKAL). Residues 209 to 219 (QSPPFTETLDT) are compositionally biased toward polar residues. The tract at residues 209-229 (QSPPFTETLDTSPKGYQVPAY) is disordered.

The protein belongs to the synaptogyrin family. As to quaternary structure, interacts (via N-terminus) with SLC6A3 (via N-terminus). May interact with VMAT2. As to expression, expressed in brain and placenta.

The protein resides in the cytoplasmic vesicle. The protein localises to the secretory vesicle. It is found in the synaptic vesicle membrane. Its subcellular location is the synapse. May play a role in regulated exocytosis. May indirectly regulate the activity of the plasma membrane dopamine transporter SLC6A3 and thereby regulate dopamine transport back from the synaptic cleft into the presynaptic terminal. This chain is Synaptogyrin-3, found in Homo sapiens (Human).